Reading from the N-terminus, the 226-residue chain is Putative integrase V10 (226 aa).

Catalysis depends on residues Arg97, His174, and Arg177. The O-(3'-phospho-DNA)-tyrosine intermediate role is filled by Tyr210.

The protein belongs to the 'phage' integrase family.

In terms of biological role, may catalyze site-specific integration of viral genome into host or helper virus DNA. The chain is Putative integrase V10 from Acanthamoeba polyphaga (Amoeba).